The following is a 226-amino-acid chain: MEPIKNLPRLCRTLGYEFKNIDLLTQALTHRSAANKHNERLEFLGDSILSIVISDALYHQFPKATEGDLSRMRATLVRGDTLTLIAKAFKLGDYLFLGPGELKSGGFRRESILADAVEAIIGAIYLDSDLEVCRKLLLHWYAERLAEIQPGVNQKDAKTLLQEYLQGLKKPLPDYQVINIEGDAHDQTFTVECRIDDLSESVIGVASSRRKAEQIAAAQVLELLKK.

The RNase III domain maps to Leu7 to Asp129. Glu42 is a binding site for Mg(2+). Residue Asp46 is part of the active site. Mg(2+)-binding residues include Asp115 and Glu118. Glu118 is a catalytic residue. The DRBM domain occupies Asp156–Lys226.

Belongs to the ribonuclease III family. Homodimer. Mg(2+) serves as cofactor.

Its subcellular location is the cytoplasm. It catalyses the reaction Endonucleolytic cleavage to 5'-phosphomonoester.. Its function is as follows. Digests double-stranded RNA. Involved in the processing of primary rRNA transcript to yield the immediate precursors to the large and small rRNAs (23S and 16S). Processes some mRNAs, and tRNAs when they are encoded in the rRNA operon. Processes pre-crRNA and tracrRNA of type II CRISPR loci if present in the organism. This Shewanella sp. (strain ANA-3) protein is Ribonuclease 3.